We begin with the raw amino-acid sequence, 155 residues long: Large ribosomal subunit protein uL16 (155 aa).

The interval Met1–Thr22 is disordered.

Belongs to the universal ribosomal protein uL16 family. In terms of assembly, part of the 50S ribosomal subunit.

Functionally, binds 23S rRNA and is also seen to make contacts with the A and possibly P site tRNAs. In Synechococcus sp. (strain JA-2-3B'a(2-13)) (Cyanobacteria bacterium Yellowstone B-Prime), this protein is Large ribosomal subunit protein uL16.